The chain runs to 221 residues: Vesicle transport v-SNARE 13 (221 aa).

The Cytoplasmic portion of the chain corresponds to 1 to 198; that stretch reads MSQGFERYER…MTRRMNRNKW (198 aa). The stretch at 32 to 93 forms a coiled coil; sequence EQKKQNLSEI…FKTEVKRITS (62 aa). The helical; Anchor for type IV membrane protein transmembrane segment at 199–219 threads the bilayer; that stretch reads TIGAIITVLVLAIIFILYFKL. Residues 220–221 lie on the Vesicular side of the membrane; sequence TR.

Belongs to the VTI1 family. Forms SNARE complexes with t-SNAREs. Expressed at low levels in roots, stems, flowers and leaves.

It localises to the vacuole membrane. Its subcellular location is the prevacuolar compartment membrane. It is found in the endosome membrane. The protein localises to the early endosome membrane. Its function is as follows. May function as a v-SNARE responsible for targeting vesicles involved in the secretory pathway. Involved in actin-dependent endosomal trafficking pathways associated with the vacuole within root hairs and root tip epidermal cells. Essential for cell wall organization and polarized root hair growth. Also required for the localization of SYP41 to the trans-Golgi network in root hair cells. This chain is Vesicle transport v-SNARE 13, found in Arabidopsis thaliana (Mouse-ear cress).